We begin with the raw amino-acid sequence, 449 residues long: Tubulin beta-8 chain (449 aa).

GTP-binding residues include Gln-11, Glu-69, Ser-138, Gly-142, Thr-143, Gly-144, Asn-204, and Asn-226. Glu-69 lines the Mg(2+) pocket. The disordered stretch occupies residues 428–449 (ATADEEEGYEYEEDEVEVQEEQ). The segment covering 429–449 (TADEEEGYEYEEDEVEVQEEQ) has biased composition (acidic residues).

This sequence belongs to the tubulin family. As to quaternary structure, dimer of alpha and beta chains. A typical microtubule is a hollow water-filled tube with an outer diameter of 25 nm and an inner diameter of 15 nM. Alpha-beta heterodimers associate head-to-tail to form protofilaments running lengthwise along the microtubule wall with the beta-tubulin subunit facing the microtubule plus end conferring a structural polarity. Microtubules usually have 13 protofilaments but different protofilament numbers can be found in some organisms and specialized cells. Requires Mg(2+) as cofactor.

The protein resides in the cytoplasm. The protein localises to the cytoskeleton. Tubulin is the major constituent of microtubules, a cylinder consisting of laterally associated linear protofilaments composed of alpha- and beta-tubulin heterodimers. Microtubules grow by the addition of GTP-tubulin dimers to the microtubule end, where a stabilizing cap forms. Below the cap, tubulin dimers are in GDP-bound state, owing to GTPase activity of alpha-tubulin. The chain is Tubulin beta-8 chain (TUBB8) from Arabidopsis thaliana (Mouse-ear cress).